Here is a 325-residue protein sequence, read N- to C-terminus: RNA ligase 1 (325 aa).

It depends on Mg(2+) as a cofactor. The cofactor is Mn(2+). AMPylates itself (auto-AMPylation).

The catalysed reaction is ATP + (ribonucleotide)n-3'-hydroxyl + 5'-phospho-(ribonucleotide)m = (ribonucleotide)n+m + AMP + diphosphate.. Functionally, functions as an RNA ligase, in vitro. The ligation reaction entails three nucleotidyl transfer steps. In the first step, the RNA ligase reacts with ATP in the absence of nucleic acid to form a covalent ligase-AMP intermediate and release pyrophosphate. In step 2, the ligase-AMP binds to the nucleic acid and transfers the adenylate to the 5'-PO4 terminus to form an adenylylated intermediate. In step 3, the RNA ligase directs the attack of the 3'-OH on the 5'-phosphoanhydride linkage, resulting in a repaired 3'-5' phosphodiester and release of AMP. Exhibits selectivity for single-stranded RNA substrates and may not have nick-sealing activity on double-stranded DNA-RNA hybrids. May play a role in maintaining RNA integrity under stress conditions, for example in response to reactive oxygen species (ROS). The sequence is that of RNA ligase 1 from Rattus norvegicus (Rat).